The chain runs to 176 residues: PKHD-type hydroxylase Mfla_0096 (176 aa).

Positions 78–147 constitute a Fe2OG dioxygenase domain; sequence KVFPPLFNRY…NQIARGTYGA (70 aa).

Requires Fe(2+) as cofactor. The cofactor is L-ascorbate.

This Methylobacillus flagellatus (strain ATCC 51484 / DSM 6875 / VKM B-1610 / KT) protein is PKHD-type hydroxylase Mfla_0096.